We begin with the raw amino-acid sequence, 339 residues long: MESLIQVQDVVQRFIREQPCWTTFLLALGSFNALRIIYQTLSVVLQTFVLPGTSLKRFGAKKGAWAVVTGATDGIGKEFAMQLGKAGFNVLLVARNPATLAATAGEIEQKYKVQTGTFSIDFAAATEEKYTALGEVLTGLDVGVLVNNVGKSHNMPAYLVDTPRDEMRDIVEINVNATLRVTYAILPGMVKNKRGLILNIGSFAGAIPSPMLATYSGTKAFLSTFSSALGEEVKKDGIIVENVNTYFVVSKLSKIRKSSLLIPTPAPYVRSVLSKVGLACGAAFSGRPNTSTPYWSHALLDYAMTLVGIPSLFIRYTHNLHIDIRRRALRKLEREAKAQ.

A helical transmembrane segment spans residues 21–41 (WTTFLLALGSFNALRIIYQTL). Residues V67, N96, D121, N148, Y215, K219, V248, and S250 each coordinate NADP(+). Y215 serves as the catalytic Proton acceptor. Catalysis depends on K219, which acts as the Lowers pKa of active site Tyr.

It belongs to the short-chain dehydrogenases/reductases (SDR) family.

Its subcellular location is the endoplasmic reticulum membrane. It carries out the reaction a very-long-chain (3R)-3-hydroxyacyl-CoA + NADP(+) = a very-long-chain 3-oxoacyl-CoA + NADPH + H(+). It participates in lipid metabolism; fatty acid biosynthesis. Component of the microsomal membrane bound fatty acid elongation system, which produces the 26-carbon very long-chain fatty acids (VLCFA) from palmitate. Catalyzes the reduction of the 3-ketoacyl-CoA intermediate that is formed in each cycle of fatty acid elongation. VLCFAs serve as precursors for ceramide and sphingolipids. The chain is Very-long-chain 3-oxoacyl-CoA reductase from Coprinopsis cinerea (strain Okayama-7 / 130 / ATCC MYA-4618 / FGSC 9003) (Inky cap fungus).